The primary structure comprises 301 residues: 2-(hydroxymethyl)glutarate dehydrogenase (301 aa).

NAD(+) is bound by residues 8–22 and Ser-99; that span reads GFIG…MAIN. Lys-174 is an active-site residue. Residue Lys-243 participates in NAD(+) binding.

Belongs to the HIBADH-related family. As to quaternary structure, homotetramer.

It carries out the reaction (S)-2-hydroxymethylglutarate + NAD(+) = 2-formylglutarate + NADH + H(+). The protein operates within cofactor degradation; nicotinate degradation; propanoate and pyruvate from 6-hydroxynicotinate: step 3/8. Catalyzes the conversion of 2-formylglutarate to (S)-2-hydroxymethylglutarate. Has very low activity with (S)-3-hydroxyisobutyrate. This is 2-(hydroxymethyl)glutarate dehydrogenase from Eubacterium barkeri (Clostridium barkeri).